A 721-amino-acid chain; its full sequence is MAGDLPPGRWSALLVGAWWPARPDAPMAGVTYWRKAAQLKRNEANDLRNERSLLAVNQGRTADDLLERYWRGEQRLATIAHQCEVKSDQSEQVADAVNYLRDRLTEIAQSGNQQINQILAGKGPIEAKVAAVNAVIEQSNAMADHVGATAMSNIIDATQRVFDETIGGDAHTWLRDHGVSLDTPARPRPVTAEDMTSMTANSPAGSPFGAAPSAPSHSTTTSGPPTAPTPTSPFGTAPMVLSSSSTSSGPPTAPTPTSPFGTAPMPPGPPPPGTVSPPLPPSAPAVGVGGPSVPAAGMPPAAAAATAPLSPQSLGQSFTTGMTTGTPAAAGAQALSAGALHAATEPLPPPAPPPTTPTVTTPTVATATTAGIPHIPDSAPTPSPAPIAPPTTDNASAMTPIAPMVANGPPASPAPPAAAPAGPLPAYGADLRPPVTTPPATPPTPTGPISGAAVTPSSPAAGGSLMSPVVNKSTAPATTQAQPSNPTPPLASATAAATTGAAAGDTSRRAAEQQRLRRILDTVARQEPGLSWAAGLRDNGQTTLLVTDLASGWIPPHIRLPAHITLLEPAPRRRHATVTDLLGTTTVAAAHHPHGYLSQPDPDTPALTGDRTARIAPTIDELGPTLVETVRRHDTLPPIAQAVVVAATRNYGVPDNETDLLHHKTTEIHQAVLTTYPNHDIATVVDWMLLAAINALIAGDQSGANYHLAWAIAAISTRRSR.

Disordered stretches follow at residues 196-291 (TSMT…VGGP) and 370-513 (AGIP…AAEQ). Composition is skewed to low complexity over residues 202–224 (SPAGSPFGAAPSAPSHSTTTSGP) and 232–250 (SPFGTAPMVLSSSSTSSGP). Composition is skewed to pro residues over residues 264-283 (PMPPGPPPPGTVSPPLPPSA) and 379-389 (APTPSPAPIAP). The span at 419–429 (APAGPLPAYGA) shows a compositional bias: low complexity. Positions 435-446 (VTTPPATPPTPT) are enriched in pro residues. Positions 470–484 (VNKSTAPATTQAQPS) are enriched in polar residues. Residues 491 to 505 (ASATAAATTGAAAGD) are compositionally biased toward low complexity.

This is an uncharacterized protein from Mycobacterium tuberculosis (strain ATCC 25618 / H37Rv).